The chain runs to 824 residues: Dapper 1 (824 aa).

Disordered regions lie at residues 1-34 (MKPI…QRTR), 61-80 (ALTP…GDTP), 131-150 (EEHL…LSDG), 454-487 (TSNV…ESTQ), and 516-536 (ASSS…SSSQ). The tract at residues 2–343 (KPIPATPDHL…PVRTNKPRTS (342 aa)) is interaction with tcf7l1. A compositionally biased stretch (basic and acidic residues) spans 11-34 (LGQHQESPRRKDKGEAESERQRTR). Residues 19–47 (RRKDKGEAESERQRTRERLEATLAGLAEL) are a coiled coil. Residues 520–530 (FDERPPLDFKS) show a composition bias toward basic and acidic residues. Residues 821 to 824 (MTTV) carry the PDZ-binding motif.

The protein belongs to the dapper family. As to quaternary structure, interacts with dbf4, dvl2 and tcf7l1.

Its subcellular location is the cytoplasm. It is found in the nucleus. Involved in regulation of intracellular signaling pathways during development. Specifically thought to play a role in canonical and/or non-canonical Wnt signaling pathways through interaction with DSH (Dishevelled) family proteins. Binds to dvl2 and regulates the degradation of ctnnb1/beta-catenin, thereby modulating the transcriptional activation of target genes of the Wnt signaling pathway. May also bind to and directly stimulate the activity of tcf7l1. This Xenopus tropicalis (Western clawed frog) protein is Dapper 1 (dact1).